A 371-amino-acid polypeptide reads, in one-letter code: Assembly protein G7 (371 aa).

It belongs to the chordopoxvirinae G7 family. In terms of assembly, part of a complex composed of A30, G7, F10 kinase, A15, D2, D3, and J1. In terms of processing, phosphorylated on serines by F10 kinase, phosphorylation state is regulated by H1 phosphatase. Undergoes proteolytic processing during morphogenesis, probably required for the transformation of immature virions (IV) into mature virions (MV).

The protein localises to the host cytoplasm. It is found in the virion. Late protein which is a part of a large complex required for early virion morphogenesis. This complex participates in the formation of virosomes and the incorporation of virosomal contents into nascent immature virions. This chain is Assembly protein G7, found in Homo sapiens (Human).